The chain runs to 459 residues: Probable rhamnogalacturonase C (459 aa).

The signal sequence occupies residues 1-18 (MRASILPLTLFLATLAGA). Residues Asn36, Asn64, Asn77, Asn140, and Asn155 are each glycosylated (N-linked (GlcNAc...) asparagine). The cysteines at positions 39 and 65 are disulfide-linked. The Proton donor role is filled by Asp216. The cysteines at positions 218 and 235 are disulfide-linked. Asn236 and Asn251 each carry an N-linked (GlcNAc...) asparagine glycan. Residue His290 is part of the active site. Asn315 carries N-linked (GlcNAc...) asparagine glycosylation. Cys337 and Cys343 are disulfide-bonded. A glycan (N-linked (GlcNAc...) asparagine) is linked at Asn356. Cysteines 365 and 374 form a disulfide.

Belongs to the glycosyl hydrolase 28 family.

The protein localises to the secreted. Pectinolytic enzymes consist of four classes of enzymes: pectine lyase, polygalacturonase, pectin methylesterase and rhamnogalacturonase. Hydrolyzes alpha-D-galacturonopyranosyl-(1,2)-alpha-L-rhamnopyranosyl linkages in the backbone of the hairy regions of pectins. The sequence is that of Probable rhamnogalacturonase C (rhgC) from Aspergillus niger (strain ATCC MYA-4892 / CBS 513.88 / FGSC A1513).